Consider the following 98-residue polypeptide: NADH-ubiquinone oxidoreductase chain 4L (98 aa).

Transmembrane regions (helical) follow at residues 1–21 (MTSINLNLTMAFSLALTGVLV), 28–48 (STLLCLEGMMLSLFILMALLI), and 59–79 (APLILLVFSACEAGVGLALLV).

This sequence belongs to the complex I subunit 4L family. As to quaternary structure, core subunit of respiratory chain NADH dehydrogenase (Complex I) which is composed of 45 different subunits.

It localises to the mitochondrion inner membrane. The catalysed reaction is a ubiquinone + NADH + 5 H(+)(in) = a ubiquinol + NAD(+) + 4 H(+)(out). Functionally, core subunit of the mitochondrial membrane respiratory chain NADH dehydrogenase (Complex I) which catalyzes electron transfer from NADH through the respiratory chain, using ubiquinone as an electron acceptor. Part of the enzyme membrane arm which is embedded in the lipid bilayer and involved in proton translocation. The polypeptide is NADH-ubiquinone oxidoreductase chain 4L (MT-ND4L) (Dactylopsila trivirgata (Striped possum)).